The chain runs to 292 residues: MSMPATSTKTTKLATSLIDEYALLGWRAMLTEVNLSPKPGLVDRINCGAHKDMALEDFHRSALAIQGWLPRFIEFGACSAEMAPEAVLNGLRPIGMACEGDMFRATAGVNTHKGSIFSLGLLCAAIGRLLQLNQPVTPTTVCSTAASFCRGLTDRELRTNNSQLTAGQRLYQQLGLTGARGEAEAGYPLVINHALPHYLTLLDQGLDPELALLDTLLLLMATNGDTNVASRGGEGGLRWLQREAQTLLNNGGIRTPADLDYLRQFDRECIERNLSPGGSADLLIITWFLAQI.

Belongs to the CitG/MdcB family.

It carries out the reaction 3'-dephospho-CoA + ATP = 2'-(5''-triphospho-alpha-D-ribosyl)-3'-dephospho-CoA + adenine. In terms of biological role, catalyzes the formation of 2-(5''-triphosphoribosyl)-3'-dephosphocoenzyme-A, the precursor of the prosthetic group of the holo-acyl carrier protein (gamma chain) of citrate lyase, from ATP and dephospho-CoA. The sequence is that of 2-(5''-triphosphoribosyl)-3'-dephosphocoenzyme-A synthase from Escherichia coli (strain SMS-3-5 / SECEC).